Reading from the N-terminus, the 438-residue chain is sn-glycerol-3-phosphate-binding periplasmic protein UgpB (438 aa).

An N-terminal signal peptide occupies residues 1 to 23 (MKPLHYTASALALGLALMGNAQA). Residues Tyr65, Glu89, Ser144, Ser270, Gly307, Tyr346, and Arg397 each coordinate sn-glycerol 3-phosphate.

It belongs to the bacterial solute-binding protein 1 family. As to quaternary structure, the complex is composed of two ATP-binding proteins (UgpC), two transmembrane proteins (UgpA and UgpE) and a solute-binding protein (UgpB).

The protein resides in the periplasm. Functionally, part of the ABC transporter complex UgpBAEC involved in sn-glycerol-3-phosphate (G3P) import. Binds G3P. In Escherichia coli O157:H7, this protein is sn-glycerol-3-phosphate-binding periplasmic protein UgpB (ugpB).